A 1407-amino-acid polypeptide reads, in one-letter code: DNA-directed RNA polymerase subunit beta' (1407 aa).

Zn(2+) is bound by residues Cys-70, Cys-72, Cys-85, and Cys-88. Mg(2+)-binding residues include Asp-460, Asp-462, and Asp-464. Positions 814, 888, 895, and 898 each coordinate Zn(2+).

It belongs to the RNA polymerase beta' chain family. The RNAP catalytic core consists of 2 alpha, 1 beta, 1 beta' and 1 omega subunit. When a sigma factor is associated with the core the holoenzyme is formed, which can initiate transcription. Mg(2+) is required as a cofactor. Zn(2+) serves as cofactor.

It carries out the reaction RNA(n) + a ribonucleoside 5'-triphosphate = RNA(n+1) + diphosphate. Its function is as follows. DNA-dependent RNA polymerase catalyzes the transcription of DNA into RNA using the four ribonucleoside triphosphates as substrates. The chain is DNA-directed RNA polymerase subunit beta' from Cronobacter sakazakii (strain ATCC BAA-894) (Enterobacter sakazakii).